The following is a 312-amino-acid chain: Acetyl-coenzyme A carboxylase carboxyl transferase subunit alpha (312 aa).

The CoA carboxyltransferase C-terminal domain maps to 36-286 (NLEKEISKTY…ADYVKKSLNE (251 aa)).

It belongs to the AccA family. In terms of assembly, acetyl-CoA carboxylase is a heterohexamer composed of biotin carboxyl carrier protein (AccB), biotin carboxylase (AccC) and two subunits each of ACCase subunit alpha (AccA) and ACCase subunit beta (AccD).

It is found in the cytoplasm. The catalysed reaction is N(6)-carboxybiotinyl-L-lysyl-[protein] + acetyl-CoA = N(6)-biotinyl-L-lysyl-[protein] + malonyl-CoA. The protein operates within lipid metabolism; malonyl-CoA biosynthesis; malonyl-CoA from acetyl-CoA: step 1/1. Functionally, component of the acetyl coenzyme A carboxylase (ACC) complex. First, biotin carboxylase catalyzes the carboxylation of biotin on its carrier protein (BCCP) and then the CO(2) group is transferred by the carboxyltransferase to acetyl-CoA to form malonyl-CoA. This chain is Acetyl-coenzyme A carboxylase carboxyl transferase subunit alpha, found in Campylobacter jejuni (strain RM1221).